The sequence spans 76 residues: ATP synthase peripheral stalk subunit F6, mitochondrial (76 aa).

N6-acetyllysine occurs at positions 9, 14, and 47. 2 positions are modified to N6-acetyllysine; alternate: lysine 52 and lysine 67. An N6-succinyllysine; alternate mark is found at lysine 52 and lysine 67. The residue at position 73 (lysine 73) is an N6-acetyllysine. Position 76 is a phosphoserine (serine 76).

The protein belongs to the eukaryotic ATPase subunit F6 family. As to quaternary structure, component of the ATP synthase complex composed at least of ATP5F1A/subunit alpha, ATP5F1B/subunit beta, ATP5MC1/subunit c (homooctomer), MT-ATP6/subunit a, MT-ATP8/subunit 8, ATP5ME/subunit e, ATP5MF/subunit f, ATP5MG/subunit g, ATP5MK/subunit k, ATP5MJ/subunit j, ATP5F1C/subunit gamma, ATP5F1D/subunit delta, ATP5F1E/subunit epsilon, ATP5PF/subunit F6, ATP5PB/subunit b, ATP5PD/subunit d, ATP5PO/subunit OSCP. ATP synthase complex consists of a soluble F(1) head domain (subunits alpha(3) and beta(3)) - the catalytic core - and a membrane F(0) domain - the membrane proton channel (subunits c, a, 8, e, f, g, k and j). These two domains are linked by a central stalk (subunits gamma, delta, and epsilon) rotating inside the F1 region and a stationary peripheral stalk (subunits F6, b, d, and OSCP).

It localises to the mitochondrion. The protein resides in the mitochondrion inner membrane. Its function is as follows. Subunit F6, of the mitochondrial membrane ATP synthase complex (F(1)F(0) ATP synthase or Complex V) that produces ATP from ADP in the presence of a proton gradient across the membrane which is generated by electron transport complexes of the respiratory chain. ATP synthase complex consist of a soluble F(1) head domain - the catalytic core - and a membrane F(1) domain - the membrane proton channel. These two domains are linked by a central stalk rotating inside the F(1) region and a stationary peripheral stalk. During catalysis, ATP synthesis in the catalytic domain of F(1) is coupled via a rotary mechanism of the central stalk subunits to proton translocation. In vivo, can only synthesize ATP although its ATP hydrolase activity can be activated artificially in vitro. Part of the complex F(0) domain. Part of the complex F(0) domain and the peripheric stalk, which acts as a stator to hold the catalytic alpha(3)beta(3) subcomplex and subunit a/ATP6 static relative to the rotary elements. The sequence is that of ATP synthase peripheral stalk subunit F6, mitochondrial from Sus scrofa (Pig).